We begin with the raw amino-acid sequence, 434 residues long: Cobyrinate a,c-diamide synthase (434 aa).

In terms of domain architecture, GATase cobBQ-type spans K240 to R430. The Nucleophile role is filled by C322.

The protein belongs to the CobB/CbiA family. Mg(2+) is required as a cofactor.

The enzyme catalyses cob(II)yrinate + 2 L-glutamine + 2 ATP + 2 H2O = cob(II)yrinate a,c diamide + 2 L-glutamate + 2 ADP + 2 phosphate + 2 H(+). Its pathway is cofactor biosynthesis; adenosylcobalamin biosynthesis; cob(II)yrinate a,c-diamide from sirohydrochlorin (anaerobic route): step 10/10. Its function is as follows. Catalyzes the ATP-dependent amidation of the two carboxylate groups at positions a and c of cobyrinate, using either L-glutamine or ammonia as the nitrogen source. This Sulfolobus acidocaldarius (strain ATCC 33909 / DSM 639 / JCM 8929 / NBRC 15157 / NCIMB 11770) protein is Cobyrinate a,c-diamide synthase.